The following is a 109-amino-acid chain: Protein ripply2 (109 aa).

Positions 1–15 (MENITFTSGLNSEMD) are enriched in polar residues. Disordered stretches follow at residues 1-42 (MENI…RPAD) and 88-109 (YEDPDTEDEEDYSDEEDEKELR). Residues 20–23 (WRPW) carry the WRPW motif motif. Residues 30 to 42 (KAPDYKPYKRPAD) are compositionally biased toward basic and acidic residues. The tract at residues 53-88 (HPVKLFWPKSQCFDYLYEDAEVLLRNYPVQATICLY) is ripply homology domain. Over residues 89–109 (EDPDTEDEEDYSDEEDEKELR) the composition is skewed to acidic residues.

Belongs to the ripply family. First expressed in the paraxial mesoderm at the 90% epiboly stage, and subsequently confined to the presomitic mesoderm. Expressed in the rostral compartment of S-I and S-II.

The protein localises to the nucleus. Its function is as follows. Plays a role in somitogenesis. Required for somite segregation and establishment of rostrocaudal polarity in somites. The sequence is that of Protein ripply2 from Danio rerio (Zebrafish).